We begin with the raw amino-acid sequence, 403 residues long: Phosphopentomutase (403 aa).

Residues D13, D298, H303, D339, H340, and H351 each coordinate Mn(2+).

It belongs to the phosphopentomutase family. Requires Mn(2+) as cofactor.

The protein resides in the cytoplasm. The catalysed reaction is 2-deoxy-alpha-D-ribose 1-phosphate = 2-deoxy-D-ribose 5-phosphate. It catalyses the reaction alpha-D-ribose 1-phosphate = D-ribose 5-phosphate. Its pathway is carbohydrate degradation; 2-deoxy-D-ribose 1-phosphate degradation; D-glyceraldehyde 3-phosphate and acetaldehyde from 2-deoxy-alpha-D-ribose 1-phosphate: step 1/2. Its function is as follows. Isomerase that catalyzes the conversion of deoxy-ribose 1-phosphate (dRib-1-P) and ribose 1-phosphate (Rib-1-P) to deoxy-ribose 5-phosphate (dRib-5-P) and ribose 5-phosphate (Rib-5-P), respectively. This Streptococcus pyogenes serotype M2 (strain MGAS10270) protein is Phosphopentomutase.